A 419-amino-acid chain; its full sequence is Ubiquitin-like modifier-activating enzyme 5 (419 aa).

The tract at residues 18–47 (NRLGNVKKDHPLESSSNSKPTHQPKSPAPY) is disordered. Positions 30–41 (ESSSNSKPTHQP) are enriched in polar residues. Residues Gly-94, Asp-115, Lys-138, Asn-161, and Asn-194 each contribute to the ATP site. Positions 236 and 239 each coordinate Zn(2+). Residue Cys-260 is the Glycyl thioester intermediate of the active site. Zn(2+) contacts are provided by Cys-313 and Cys-318.

This sequence belongs to the ubiquitin-activating E1 family. UBA5 subfamily. As to quaternary structure, interacts with ufc-1. In terms of tissue distribution, expressed in the intestine.

E1-like enzyme which activates ufm-1. Required for interaction between ufm-1 and ufc-1. This Caenorhabditis elegans protein is Ubiquitin-like modifier-activating enzyme 5.